The sequence spans 324 residues: Glyoxylate/hydroxypyruvate reductase B (324 aa).

Active-site residues include arginine 237 and glutamate 266. Histidine 285 (proton donor) is an active-site residue.

The protein belongs to the D-isomer specific 2-hydroxyacid dehydrogenase family. GhrB subfamily. In terms of assembly, homodimer.

Its subcellular location is the cytoplasm. The catalysed reaction is glycolate + NADP(+) = glyoxylate + NADPH + H(+). It carries out the reaction (R)-glycerate + NAD(+) = 3-hydroxypyruvate + NADH + H(+). It catalyses the reaction (R)-glycerate + NADP(+) = 3-hydroxypyruvate + NADPH + H(+). Its function is as follows. Catalyzes the NADPH-dependent reduction of glyoxylate and hydroxypyruvate into glycolate and glycerate, respectively. The chain is Glyoxylate/hydroxypyruvate reductase B from Escherichia fergusonii (strain ATCC 35469 / DSM 13698 / CCUG 18766 / IAM 14443 / JCM 21226 / LMG 7866 / NBRC 102419 / NCTC 12128 / CDC 0568-73).